Reading from the N-terminus, the 299-residue chain is Tetrahydromethanopterin S-methyltransferase subunit E (299 aa).

The next 6 membrane-spanning stretches (helical) occupy residues 57–79, 89–111, 132–154, 164–183, 227–246, and 261–283; these read AISG…AWAL, AIIV…AFLG, HIGP…AYLA, LPLV…SSTG, FCSR…IIFL, and LVTK…AVIN.

Belongs to the MtrE family. In terms of assembly, the complex is composed of 8 subunits; MtrA, MtrB, MtrC, MtrD, MtrE, MtrF, MtrG and MtrH.

The protein resides in the cell membrane. The enzyme catalyses 5-methyl-5,6,7,8-tetrahydromethanopterin + coenzyme M + 2 Na(+)(in) = 5,6,7,8-tetrahydromethanopterin + methyl-coenzyme M + 2 Na(+)(out). It participates in one-carbon metabolism; methanogenesis from CO(2); methyl-coenzyme M from 5,10-methylene-5,6,7,8-tetrahydromethanopterin: step 2/2. Its function is as follows. Part of a complex that catalyzes the formation of methyl-coenzyme M and tetrahydromethanopterin from coenzyme M and methyl-tetrahydromethanopterin. This is an energy-conserving, sodium-ion translocating step. The protein is Tetrahydromethanopterin S-methyltransferase subunit E of Methanococcus maripaludis (strain DSM 14266 / JCM 13030 / NBRC 101832 / S2 / LL).